Consider the following 38-residue polypeptide: Large ribosomal subunit protein bL36A (38 aa).

This sequence belongs to the bacterial ribosomal protein bL36 family.

This is Large ribosomal subunit protein bL36A from Enterobacter sp. (strain 638).